Here is a 1485-residue protein sequence, read N- to C-terminus: Putative E3 ubiquitin-protein ligase LIN-1 (1485 aa).

Residues 337–353 (EENEDDSDSELENESVD) show a composition bias toward acidic residues. Disordered regions lie at residues 337–363 (EENE…IFSP) and 384–417 (NQIP…KRDS). The 76-residue stretch at 510–585 (KPPKDFVCPI…TSWKEQNPEL (76 aa)) folds into the U-box domain. WD repeat units lie at residues 1204–1241 (SSNG…PRVI), 1246–1283 (EHTK…IKCI), 1409–1448 (SLST…RVAS), and 1454–1485 (GHTK…WALD).

Expressed in roots and nodules, and at very low levels in calli and seedling shoots.

It catalyses the reaction S-ubiquitinyl-[E2 ubiquitin-conjugating enzyme]-L-cysteine + [acceptor protein]-L-lysine = [E2 ubiquitin-conjugating enzyme]-L-cysteine + N(6)-ubiquitinyl-[acceptor protein]-L-lysine.. Its pathway is protein modification; protein ubiquitination. In terms of biological role, putative E3 ubiquitin-protein ligase involved in the rhizobial infection process. Plays an important role in the early steps of infection thread formation and in growth and differentiation of nodules. The sequence is that of Putative E3 ubiquitin-protein ligase LIN-1 from Lotus japonicus (Lotus corniculatus var. japonicus).